Consider the following 133-residue polypeptide: Nickel-responsive regulator (133 aa).

The Ni(2+) site is built by His-76, His-87, His-89, and Cys-95.

It belongs to the transcriptional regulatory CopG/NikR family. Homotetramer. Requires Ni(2+) as cofactor.

Transcriptional repressor of the nikABCDE operon. Is active in the presence of excessive concentrations of intracellular nickel. This chain is Nickel-responsive regulator, found in Escherichia fergusonii (strain ATCC 35469 / DSM 13698 / CCUG 18766 / IAM 14443 / JCM 21226 / LMG 7866 / NBRC 102419 / NCTC 12128 / CDC 0568-73).